An 85-amino-acid polypeptide reads, in one-letter code: Prosialokinin (85 aa).

The first 23 residues, 1–23 (MNMFITVQIVIVLVLAVLSEAAS), serve as a signal peptide directing secretion. Positions 24-74 (LPTATERKDAMDEGPNQSDEPEGSVADPSTKDDDYSDSLKQDEKYYKVRLL) are excised as a propeptide. The disordered stretch occupies residues 26 to 61 (TATERKDAMDEGPNQSDEPEGSVADPSTKDDDYSDS). The segment covering 52-61 (STKDDDYSDS) has biased composition (basic and acidic residues). At M84 the chain carries Methionine amide.

Belongs to the tachykinin family. In terms of tissue distribution, expressed exclusively in the medial lobe of female salivary gland. Not detected in female carcass without head and salivary glands. Not detected in male tissues.

It localises to the secreted. Vasodilatory peptide. Facilitates mosquito blood feeding on vertebrate host. Induces nitric oxide (NO) release in blood vessels through the activation of the nitric oxide synthase (NOS3). Enhances endothelial permeability and induces edema at the site of inoculation in the host. Induces host smooth muscle contraction. Down-regulates production of Th1 cytokines, such as IL2 and IFN-gamma (IFNG), in mouse splenocytes. Up-regulates production of Th2 cytokines, such as IL4 and IL10, in mouse splenocytes. Promotes recruitment of host leukocytes, especially neutrophils and CD8+ T cells, to the bite site. Modulates cytokine production by host macrophages. Modulates populations of monocytes/macrophages, plasmacytoid dendritic cells, B cells, CD4+ T cells, NK and NKT cells, shifting mammalian immunity towards Th2 responses. In terms of biological role, (Microbial infection) Promotes Semliki Forest virus infection in the host. Its function is as follows. (Microbial infection) Does not affect Zika virus replication in the host. The protein is Prosialokinin of Aedes aegypti (Yellowfever mosquito).